The primary structure comprises 2346 residues: N-benzoylphenylalaninol synthetase apmA (2346 aa).

The tract at residues 263–652 (ESAAQKSPDA…GRKDLQVKIR (390 aa)) is adenylation 1. The 77-residue stretch at 784–860 (MPTTTTEMTL…DMAKAMTSTR (77 aa)) folds into the Carrier 1 domain. Serine 821 bears the O-(pantetheine 4'-phosphoryl)serine mark. Residues 896-1306 (QDAYPCSPLQ…ISPQDKENLL (411 aa)) are condensation. The tract at residues 1330–1713 (SQPNAPAICA…GRKDTQVKIR (384 aa)) is adenylation 2. Residues 1842–1924 (SALRASEDKA…GLAAFIDAEL (83 aa)) enclose the Carrier 2 domain. Serine 1883 carries the O-(pantetheine 4'-phosphoryl)serine modification. Positions 1960–2311 (VTGGTGFLGT…RNVQFLVEAG (352 aa)) are reductase (R) domain.

It belongs to the NRP synthetase family.

It catalyses the reaction benzoate + L-phenylalanine + 2 AH2 + 2 ATP = N-benzoyl-L-phenylalaninol + 2 A + 2 AMP + 2 diphosphate + H(+). It participates in secondary metabolite biosynthesis. In terms of biological role, nonribosomal peptide synthase; part of the gene cluster that mediates the biosynthesis of asperphenamate, a rare linear amino acid ester that exhibits antitumor activity towards a number of cell lines. The structure of asperphenamate contains two subunits, N-benzoylphenylalanine and N-benzoylphenylalaninol, which are connected by an inter-molecular ester bond. The first step of asperphenamate biosynthesis is the generation of N-benzoylphenylalaninol by the nonribosomal peptide synthase apmA. Using phenylalanine and benzoic acid as substrates, apmA catalyzes amide bond formation and tethers the intermediate into the NRPS chain. Then, the terminal R domain of apmA catalyzes the reduction reaction to get the shunt product N-benzoylphenylalaninol. Subsequently, the nonribosomal peptide synthase apmB activates the same substrates as does apmA (phenylalanine and benzoic acid) to produce N-benzoylphenylalanine before condensing N-benzoylphenylalanine and N-benzoylphenylalaninol to release asperphenamate. The sequence is that of N-benzoylphenylalaninol synthetase apmA from Penicillium brevicompactum.